Reading from the N-terminus, the 872-residue chain is Alanine--tRNA ligase (872 aa).

Zn(2+) is bound by residues His-567, His-571, Cys-669, and His-673.

The protein belongs to the class-II aminoacyl-tRNA synthetase family. Zn(2+) is required as a cofactor.

The protein localises to the cytoplasm. The catalysed reaction is tRNA(Ala) + L-alanine + ATP = L-alanyl-tRNA(Ala) + AMP + diphosphate. Its function is as follows. Catalyzes the attachment of alanine to tRNA(Ala) in a two-step reaction: alanine is first activated by ATP to form Ala-AMP and then transferred to the acceptor end of tRNA(Ala). Also edits incorrectly charged Ser-tRNA(Ala) and Gly-tRNA(Ala) via its editing domain. This chain is Alanine--tRNA ligase, found in Streptococcus pyogenes serotype M28 (strain MGAS6180).